The sequence spans 233 residues: Small ribosomal subunit protein uS3 (233 aa).

Residues 39 to 107 enclose the KH type-2 domain; sequence VRKYLTKELE…PAQINIAEVR (69 aa).

This sequence belongs to the universal ribosomal protein uS3 family. Part of the 30S ribosomal subunit. Forms a tight complex with proteins S10 and S14.

In terms of biological role, binds the lower part of the 30S subunit head. Binds mRNA in the 70S ribosome, positioning it for translation. This is Small ribosomal subunit protein uS3 from Pectobacterium carotovorum subsp. carotovorum (strain PC1).